We begin with the raw amino-acid sequence, 727 residues long: BRCA1-A complex subunit RAP80 (727 aa).

Positions 1 to 23 are disordered; the sequence is MPRRKKKIKEASESQNLEKKDLE. Residues 1–101 are necessary for transcriptional repression; the sequence is MPRRKKKIKE…SEQEAREVNN (101 aa). Basic and acidic residues predominate over residues 9 to 23; the sequence is KEASESQNLEKKDLE. Residue lysine 20 forms a Glycyl lysine isopeptide (Lys-Gly) (interchain with G-Cter in SUMO2) linkage. Serine 29 bears the Phosphoserine mark. Residue lysine 31 forms a Glycyl lysine isopeptide (Lys-Gly) (interchain with G-Cter in SUMO2) linkage. A phosphoserine mark is found at serine 44 and serine 46. The segment at 45 to 70 is disordered; it reads DSDGEETKEENGLQKTKTKQSNRSKC. Threonine 51 bears the Phosphothreonine mark. A compositionally biased stretch (basic residues) spans 60 to 70; sequence TKTKQSNRSKC. An LR motif motif is present at residues 60-78; sequence TKTKQSNRSKCLAKRKVAH. Glycyl lysine isopeptide (Lys-Gly) (interchain with G-Cter in SUMO2) cross-links involve residues lysine 75 and lysine 90. 2 consecutive UIM domains span residues 80-99 and 104-124; these read SEEE…AREV and EKEE…CWSS. Residues 97–103 form a UIM-linker region; the sequence is REVNNQE. The tract at residues 100 to 200 is necessary for interaction with NR6A1 N-terminus; that stretch reads NNQEEKEEEL…EEPVSGSSGS (101 aa). The disordered stretch occupies residues 133–206; that stretch reads PLAAELSSHS…SSGSWDQSSQ (74 aa). Phosphoserine is present on serine 140. Positions 176–188 are enriched in basic and acidic residues; sequence AEQRKEPWDHNEN. Positions 195–206 are enriched in low complexity; it reads SGSSGSWDQSSQ. Serine 205 carries the phosphoserine modification. Lysine 245 participates in a covalent cross-link: Glycyl lysine isopeptide (Lys-Gly) (interchain with G-Cter in SUMO2). The interval 270–400 is AIR; that stretch reads TGGTVHYYWG…EEEPTTSRGQ (131 aa). The disordered stretch occupies residues 326 to 427; it reads PRPPFLIQNE…SEGDNSVPTT (102 aa). A compositionally biased stretch (basic and acidic residues) spans 355–364; the sequence is DEAKEERQES. Serine 379 is modified (phosphoserine). Glycyl lysine isopeptide (Lys-Gly) (interchain with G-Cter in SUMO2) cross-links involve residues lysine 382 and lysine 387. Residues 400-508 are necessary for interaction with NR6A1 C-terminus; it reads QSSQGLFVEE…ENPPPAVSSS (109 aa). Serine 402 is subject to Phosphoserine. Lysine 436 participates in a covalent cross-link: Glycyl lysine isopeptide (Lys-Gly) (interchain with G-Cter in SUMO2). Phosphoserine is present on serine 474. The UBZ4-type zinc finger occupies 510–537; the sequence is RVSCPLCNQDFPPTKIEQHAMYCNGLME. Zn(2+) is bound by residues cysteine 513, cysteine 516, histidine 528, and cysteine 532. The tract at residues 513–590 is zinc-finger-like region; it reads CPLCNQDFPP…GEYQCHVEAC (78 aa). Residues lysine 552, lysine 570, lysine 595, and lysine 617 each participate in a glycyl lysine isopeptide (Lys-Gly) (interchain with G-Cter in SUMO2) cross-link. The interval 607 to 654 is disordered; the sequence is RPRVCAPVEGKQQQRLKKSKDKGHSQGRLLSLLEQSEHRTTGVEKKPK. Serine 637 carries the post-translational modification Phosphoserine. Residues 641–654 show a composition bias toward basic and acidic residues; the sequence is QSEHRTTGVEKKPK. A Glycyl lysine isopeptide (Lys-Gly) (interchain with G-Cter in SUMO2) cross-link involves residue lysine 652. Phosphoserine occurs at positions 665 and 689. A Glycyl lysine isopeptide (Lys-Gly) (interchain with G-Cter in SUMO2) cross-link involves residue lysine 708.

Belongs to the RAP80 family. As to quaternary structure, component of the ARISC complex, at least composed of UIMC1/RAP80, ABRAXAS1, BRCC3/BRCC36, BABAM2 and BABAM1/NBA1. Component of the BRCA1-A complex, at least composed of the BRCA1, BARD1, UIMC1/RAP80, ABRAXAS1, BRCC3/BRCC36, BABAM2 and BABAM1/NBA1. In the BRCA1-A complex, interacts directly with ABRAXAS1. Interacts with ESR1. Interacts with UBE2I. Interacts with NR6A1. Interacts with TSP57. Interacts with TRAIP. Post-translationally, sumoylated. Phosphorylated upon DNA damage by ATM or ATR.

It is found in the nucleus. Its function is as follows. Ubiquitin-binding protein. Specifically recognizes and binds 'Lys-63'-linked ubiquitin. Plays a central role in the BRCA1-A complex by specifically binding 'Lys-63'-linked ubiquitinated histones H2A and H2AX at DNA lesions sites, leading to target the BRCA1-BARD1 heterodimer to sites of DNA damage at double-strand breaks (DSBs). The BRCA1-A complex also possesses deubiquitinase activity that specifically removes 'Lys-63'-linked ubiquitin on histones H2A and H2AX. Also weakly binds monoubiquitin but with much less affinity than 'Lys-63'-linked ubiquitin. May interact with monoubiquitinated histones H2A and H2B; the relevance of such results is however unclear in vivo. Does not bind Lys-48'-linked ubiquitin. May indirectly act as a transcriptional repressor by inhibiting the interaction of NR6A1 with the corepressor NCOR1. This Mus musculus (Mouse) protein is BRCA1-A complex subunit RAP80 (Uimc1).